We begin with the raw amino-acid sequence, 432 residues long: Trigger factor (432 aa).

Residues 163 to 248 (GDIAVIDFEG…LKALNKKELP (86 aa)) form the PPIase FKBP-type domain.

It belongs to the FKBP-type PPIase family. Tig subfamily.

The protein localises to the cytoplasm. The enzyme catalyses [protein]-peptidylproline (omega=180) = [protein]-peptidylproline (omega=0). Its function is as follows. Involved in protein export. Acts as a chaperone by maintaining the newly synthesized protein in an open conformation. Functions as a peptidyl-prolyl cis-trans isomerase. This Thermoanaerobacter pseudethanolicus (strain ATCC 33223 / 39E) (Clostridium thermohydrosulfuricum) protein is Trigger factor.